The following is a 143-amino-acid chain: MAKKVEAYIKLQVAAGKANPSPPVGPALGQKGVNIMEFCKAFNAQTQGMEPGSPVPVVISVYSDRSFTFTMKTPPASFLLKKAAGLKSGSARPNTQKVGKVTRAQLEEIATIKMADLTAGDMDAAVRTIAGSARAMGLETEGV.

This sequence belongs to the universal ribosomal protein uL11 family. As to quaternary structure, part of the ribosomal stalk of the 50S ribosomal subunit. Interacts with L10 and the large rRNA to form the base of the stalk. L10 forms an elongated spine to which L12 dimers bind in a sequential fashion forming a multimeric L10(L12)X complex. One or more lysine residues are methylated.

In terms of biological role, forms part of the ribosomal stalk which helps the ribosome interact with GTP-bound translation factors. The chain is Large ribosomal subunit protein uL11 from Saccharophagus degradans (strain 2-40 / ATCC 43961 / DSM 17024).